We begin with the raw amino-acid sequence, 657 residues long: Histidine ammonia-lyase (657 aa).

A cross-link (5-imidazolinone (Ala-Gly)) is located at residues 253–255 (ASG). Ser254 is subject to 2,3-didehydroalanine (Ser). Thr396 carries the phosphothreonine modification. A Phosphoserine modification is found at Ser635. Thr637 bears the Phosphothreonine mark. Residue Ser648 is modified to Phosphoserine.

Belongs to the PAL/histidase family. Contains an active site 4-methylidene-imidazol-5-one (MIO), which is formed autocatalytically by cyclization and dehydration of residues Ala-Ser-Gly.

The enzyme catalyses L-histidine = trans-urocanate + NH4(+). It participates in amino-acid degradation; L-histidine degradation into L-glutamate; N-formimidoyl-L-glutamate from L-histidine: step 1/3. In Mus musculus (Mouse), this protein is Histidine ammonia-lyase (Hal).